We begin with the raw amino-acid sequence, 162 residues long: MAETKSGKSGLISHGVAAQNRKARFDYTIKETVEAGLVLKGPEVKSLRHGRATLSEAWAGERDGEMFLFNAYIPEYQGGVLSRFEPRSPRKLLLKRKQINHLLGAVQKQGQTVVPLQIHFNERGMAKVLLGVAEGRNKADKRAAIASRDWQRDKARLMREKG.

It belongs to the SmpB family.

The protein localises to the cytoplasm. Its function is as follows. Required for rescue of stalled ribosomes mediated by trans-translation. Binds to transfer-messenger RNA (tmRNA), required for stable association of tmRNA with ribosomes. tmRNA and SmpB together mimic tRNA shape, replacing the anticodon stem-loop with SmpB. tmRNA is encoded by the ssrA gene; the 2 termini fold to resemble tRNA(Ala) and it encodes a 'tag peptide', a short internal open reading frame. During trans-translation Ala-aminoacylated tmRNA acts like a tRNA, entering the A-site of stalled ribosomes, displacing the stalled mRNA. The ribosome then switches to translate the ORF on the tmRNA; the nascent peptide is terminated with the 'tag peptide' encoded by the tmRNA and targeted for degradation. The ribosome is freed to recommence translation, which seems to be the essential function of trans-translation. This Granulibacter bethesdensis (strain ATCC BAA-1260 / CGDNIH1) protein is SsrA-binding protein.